Reading from the N-terminus, the 397-residue chain is L-cysteine desulfidase (397 aa).

The active-site Proton acceptor is Cys-23. [4Fe-4S] cluster contacts are provided by Cys-288, Cys-330, and Cys-337.

It belongs to the L-cysteine desulfidase family. Homotrimer. [4Fe-4S] cluster serves as cofactor.

It carries out the reaction L-cysteine + H2O = hydrogen sulfide + pyruvate + NH4(+) + H(+). Its function is as follows. Catalyzes the cleavage of L-cysteine to form 2-aminoprop-2-enoate and sulfide. The former then spontaneously hydrolyzes to pyruvate and NH(3). May be responsible for the production of sulfide required for the biosynthesis of iron-sulfur centers in this archaea. In Methanococcus maripaludis (strain C5 / ATCC BAA-1333), this protein is L-cysteine desulfidase.